The chain runs to 37 residues: Large ribosomal subunit protein bL36 (37 aa).

The protein belongs to the bacterial ribosomal protein bL36 family.

This Synechococcus elongatus (strain ATCC 33912 / PCC 7942 / FACHB-805) (Anacystis nidulans R2) protein is Large ribosomal subunit protein bL36.